Reading from the N-terminus, the 253-residue chain is Protein C1orf43 homolog (253 aa).

The helical transmembrane segment at 11-31 threads the bilayer; the sequence is VNVVLVMAYGSLVFVLLFIFV. The tract at residues 194–213 is disordered; the sequence is SGSSQRQHQSAAKDLTQSPE.

It localises to the membrane. The protein localises to the golgi apparatus. Its subcellular location is the mitochondrion. Functionally, general regulator of phagocytosis. Required to uptake Gram negative bacterium by macrophages. The chain is Protein C1orf43 homolog from Bos taurus (Bovine).